The following is a 311-amino-acid chain: Catechol 1,2-dioxygenase 1 (311 aa).

Residues Tyr-164, Tyr-200, His-224, and His-226 each coordinate Fe cation.

It belongs to the intradiol ring-cleavage dioxygenase family. In terms of assembly, homodimer. It depends on Fe(3+) as a cofactor.

The catalysed reaction is catechol + O2 = cis,cis-muconate + 2 H(+). Its pathway is aromatic compound metabolism; beta-ketoadipate pathway; 5-oxo-4,5-dihydro-2-furylacetate from catechol: step 1/3. In terms of biological role, can cleave 4-methyl-, 4-chloro-, and 3-methoxycatechol at lower rates than catechol, but has no activity with 4-nitrocatechol or protocatechuic acid. In Acinetobacter lwoffii, this protein is Catechol 1,2-dioxygenase 1 (catA1).